We begin with the raw amino-acid sequence, 492 residues long: Virion host shutoff protein (492 aa).

Disordered regions lie at residues 110–130 (EEAS…SRPS), 288–307 (SQAR…LESM), and 334–371 (EDDY…ELVQ).

Belongs to the herpesviridae VHS protein family. As to quaternary structure, interacts with human EIF4H, EIF4A1 and EIF4A2; interaction with eIF4AI and EIF4A2 presumably allows Vhs protein to associate with the eIF4F cap-binding complex.

It localises to the virion. Minor structural protein that acts as an endoribonuclease during lytic infection. Degrades host mRNAs in the cytoplasm by cutting them at preferred sites, including some in regions of translation initiation. Together with inhibition of host splicing by ICP27, contributes to an overall decrease in host protein synthesis. Also, after the onset of viral transcription, accelerates the turnover of viral mRNA, thereby facilitating the sequential expression of different classes of viral genes. Binds translation initiation factors eIF4H, eIF4AI, and eIF4AII, thereby may interact directly with the translation initiation complex and thus digest specifically mRNAs. Also impedes antigen presentation by major histocompatibility complex class I and class II molecules, inhibits secretion of cytokines that would otherwise recruit lymphocytes and neutrophils cells to the site of infection and blocks the activation of dendritic cells. Impedes the alpha/beta interferon-mediated response to infection. Inhibits the integrated stress response (ISR) in the infected cell, this function requires the endonuclease activity. Stress granule formation is thus inhibited, which allows protein synthesis and viral replication. This Homo sapiens (Human) protein is Virion host shutoff protein (UL41).